Here is a 196-residue protein sequence, read N- to C-terminus: Thymidine kinase (196 aa).

Residues Ser9–Ser16 and Asp87–Gln90 contribute to the ATP site. The active-site Proton acceptor is the Glu88. Cys145, Cys147, Cys182, and His185 together coordinate Zn(2+).

This sequence belongs to the thymidine kinase family. As to quaternary structure, homotetramer.

It localises to the cytoplasm. The enzyme catalyses thymidine + ATP = dTMP + ADP + H(+). The protein is Thymidine kinase of Yersinia pestis.